The sequence spans 527 residues: V-set and immunoglobulin domain-containing protein 10 (527 aa).

Positions 1–13 (MWTRRWIQFLVLC) are cleaved as a signal peptide. Ig-like C2-type domains are found at residues 14–111 (LHLW…LKVS), 123–212 (PTRT…RQLL), 216–306 (PPIT…CQIQ), and 310–399 (PLLE…KEIN). The Extracellular portion of the chain corresponds to 23–409 (YLGVFRGDVN…VWLTVNKPHN (387 aa)). N-linked (GlcNAc...) asparagine glycosylation is found at Asn32, Asn41, Asn52, Asn64, Asn74, Asn90, Asn129, Asn139, Asn191, Asn206, Asn226, Asn260, Asn276, Asn325, Asn346, and Asn375. A disulfide bond links Cys144 and Cys194. An intrachain disulfide couples Cys238 to Cys288. Cysteines 330 and 387 form a disulfide. Residues 410–430 (IVGLVTALLLLFLLVVAIITG) form a helical membrane-spanning segment. Over 431-527 (TVLYCDPQIY…TGEENQNEEI (97 aa)) the chain is Cytoplasmic. The tract at residues 501-527 (RPPESTSSDLFSEVSDDTGEENQNEEI) is disordered. Acidic residues predominate over residues 514–527 (VSDDTGEENQNEEI).

The protein localises to the membrane. This chain is V-set and immunoglobulin domain-containing protein 10 (vsig10), found in Xenopus laevis (African clawed frog).